The sequence spans 340 residues: Glucokinase (340 aa).

Residue Gly17 to Thr22 participates in ATP binding.

This sequence belongs to the bacterial glucokinase family.

The protein localises to the cytoplasm. The catalysed reaction is D-glucose + ATP = D-glucose 6-phosphate + ADP + H(+). The protein is Glucokinase of Agrobacterium fabrum (strain C58 / ATCC 33970) (Agrobacterium tumefaciens (strain C58)).